The following is a 23-amino-acid chain: U22-ctenitoxin-Co1a (23 aa).

As to expression, expressed by the venom gland.

It is found in the secreted. The protein is U22-ctenitoxin-Co1a of Ctenus ornatus (Brazilian spider).